The following is a 251-amino-acid chain: Flap endonuclease Xni (251 aa).

Mg(2+) is bound at residue Asp-104. In terms of domain architecture, 5'-3' exonuclease spans 160–250 (VLPRQLPDYW…SGNLQQLRLK (91 aa)). K(+) is bound by residues Leu-171, Ala-172, Pro-180, Val-182, and Val-185. Positions 184-189 (GVGAKT) are interaction with DNA.

It belongs to the Xni family. Mg(2+) serves as cofactor. It depends on K(+) as a cofactor.

In terms of biological role, has flap endonuclease activity. During DNA replication, flap endonucleases cleave the 5'-overhanging flap structure that is generated by displacement synthesis when DNA polymerase encounters the 5'-end of a downstream Okazaki fragment. The chain is Flap endonuclease Xni from Yersinia pseudotuberculosis serotype I (strain IP32953).